The following is a 185-amino-acid chain: Ribosome maturation factor RimM (185 aa).

The PRC barrel domain maps to 106–185; that stretch reads SGEYYWKDLL…IIEVDWDPGF (80 aa).

It belongs to the RimM family. As to quaternary structure, binds ribosomal protein uS19.

The protein localises to the cytoplasm. An accessory protein needed during the final step in the assembly of 30S ribosomal subunit, possibly for assembly of the head region. Essential for efficient processing of 16S rRNA. May be needed both before and after RbfA during the maturation of 16S rRNA. It has affinity for free ribosomal 30S subunits but not for 70S ribosomes. The chain is Ribosome maturation factor RimM from Sodalis glossinidius (strain morsitans).